The primary structure comprises 368 residues: MKNYLNFETDIKNLEIEIDKLKDPYNQDGLSEVDTKKISESQKEIDNKLQEIYSNLDPWQTTLVARHEDRPKAKFFIDNLFEDFIPLSGDRYYGEDKSVLAGFAKFDEKSVLVIGQEKGDSLESRIERNFGMMRPEGYRKTIRLMKLANKFNIPIISFIDTPGAYPGVGAEERGQAEAIAKSIECCMSLNVPTLAIVIGEGGSGGAIALASSNKVIMLENAIYSVISPEGCATILWRDPKRTLEAAKAMKLSSKDLLELKVIDEIIPEPIGGAHRDRDLILDNVRKSIEKNLNEFFNMSGEEIFNHRKNKFLTIGRSKGFVNQIDDLSTLSMKESKVNLFIKNFFKSKLNLAVLFGVIVLLGYFIFSL.

A CoA carboxyltransferase C-terminal domain is found at 44-294 (EIDNKLQEIY…RKSIEKNLNE (251 aa)).

This sequence belongs to the AccA family. As to quaternary structure, acetyl-CoA carboxylase is a heterohexamer composed of biotin carboxyl carrier protein (AccB), biotin carboxylase (AccC) and two subunits each of ACCase subunit alpha (AccA) and ACCase subunit beta (AccD).

It is found in the cytoplasm. It catalyses the reaction N(6)-carboxybiotinyl-L-lysyl-[protein] + acetyl-CoA = N(6)-biotinyl-L-lysyl-[protein] + malonyl-CoA. The protein operates within lipid metabolism; malonyl-CoA biosynthesis; malonyl-CoA from acetyl-CoA: step 1/1. Functionally, component of the acetyl coenzyme A carboxylase (ACC) complex. First, biotin carboxylase catalyzes the carboxylation of biotin on its carrier protein (BCCP) and then the CO(2) group is transferred by the carboxyltransferase to acetyl-CoA to form malonyl-CoA. This chain is Acetyl-coenzyme A carboxylase carboxyl transferase subunit alpha, found in Pelagibacter ubique (strain HTCC1062).